The primary structure comprises 222 residues: 2-C-methyl-D-erythritol 4-phosphate cytidylyltransferase (222 aa).

Belongs to the IspD/TarI cytidylyltransferase family. IspD subfamily.

The enzyme catalyses 2-C-methyl-D-erythritol 4-phosphate + CTP + H(+) = 4-CDP-2-C-methyl-D-erythritol + diphosphate. The protein operates within isoprenoid biosynthesis; isopentenyl diphosphate biosynthesis via DXP pathway; isopentenyl diphosphate from 1-deoxy-D-xylulose 5-phosphate: step 2/6. Catalyzes the formation of 4-diphosphocytidyl-2-C-methyl-D-erythritol from CTP and 2-C-methyl-D-erythritol 4-phosphate (MEP). The protein is 2-C-methyl-D-erythritol 4-phosphate cytidylyltransferase of Thermotoga sp. (strain RQ2).